Here is a 257-residue protein sequence, read N- to C-terminus: 3-methyl-2-oxobutanoate hydroxymethyltransferase (257 aa).

Positions 42 and 86 each coordinate Mg(2+). Residues 42-43 (DS), D86, and K116 each bind 3-methyl-2-oxobutanoate. E118 contacts Mg(2+). The Proton acceptor role is filled by E185.

This sequence belongs to the PanB family. In terms of assembly, homodecamer; pentamer of dimers. Mg(2+) is required as a cofactor.

It localises to the cytoplasm. It carries out the reaction 3-methyl-2-oxobutanoate + (6R)-5,10-methylene-5,6,7,8-tetrahydrofolate + H2O = 2-dehydropantoate + (6S)-5,6,7,8-tetrahydrofolate. It participates in cofactor biosynthesis; (R)-pantothenate biosynthesis; (R)-pantoate from 3-methyl-2-oxobutanoate: step 1/2. In terms of biological role, catalyzes the reversible reaction in which hydroxymethyl group from 5,10-methylenetetrahydrofolate is transferred onto alpha-ketoisovalerate to form ketopantoate. This Prochlorococcus marinus subsp. pastoris (strain CCMP1986 / NIES-2087 / MED4) protein is 3-methyl-2-oxobutanoate hydroxymethyltransferase.